A 289-amino-acid chain; its full sequence is NADPH-dependent 7-cyano-7-deazaguanine reductase (289 aa).

81-83 (IES) contributes to the substrate binding site. Residue 83–84 (SK) participates in NADPH binding. C196 serves as the catalytic Thioimide intermediate. D203 (proton donor) is an active-site residue. Position 235–236 (235–236 (HE)) interacts with substrate. An NADPH-binding site is contributed by 264 to 265 (RG).

The protein belongs to the GTP cyclohydrolase I family. QueF type 2 subfamily. As to quaternary structure, homodimer.

It localises to the cytoplasm. The enzyme catalyses 7-aminomethyl-7-carbaguanine + 2 NADP(+) = 7-cyano-7-deazaguanine + 2 NADPH + 3 H(+). It functions in the pathway tRNA modification; tRNA-queuosine biosynthesis. Catalyzes the NADPH-dependent reduction of 7-cyano-7-deazaguanine (preQ0) to 7-aminomethyl-7-deazaguanine (preQ1). This Albidiferax ferrireducens (strain ATCC BAA-621 / DSM 15236 / T118) (Rhodoferax ferrireducens) protein is NADPH-dependent 7-cyano-7-deazaguanine reductase.